The chain runs to 1448 residues: Gag-Pol polyprotein (1448 aa).

Residue Gly2 is the site of N-myristoyl glycine; by host attachment. The Nuclear export signal motif lies at 16-22 (LEKIRLR). A Nuclear localization signal motif is present at residues 26–32 (KKKYMLK). Disordered stretches follow at residues 114 to 133 (TAETMPKTSRPTAPSSGRGG) and 217 to 239 (QHPQPAPQQGQLREPSGSDIAGT). The span at 119-128 (PKTSRPTAPS) shows a compositional bias: polar residues. 2 consecutive CCHC-type zinc fingers follow at residues 391 to 408 (IKCWNCGKEGHSARQCRA) and 412 to 429 (QGCWKCGKMDHVMAKCPD). The interval 443-464 (EAPQFPHGSSASGADANCSPRG) is disordered. The Peptidase A2 domain occupies 517 to 586 (VEVLLDTGAD…TPINIFGRNL (70 aa)). The active-site For protease activity; shared with dimeric partner is the Asp522. The Reverse transcriptase domain occupies 640–830 (DGQLEEAPPT…PPFQWMGYEL (191 aa)). Positions 706, 781, and 782 each coordinate Mg(2+). The RT 'primer grip' stretch occupies residues 823–831 (FQWMGYELW). The Tryptophan repeat motif motif lies at 993–1009 (WEQWWTDYWQVTWIPEW). Positions 1029 to 1152 (IEGEETYYTD…IDHLVSQGIR (124 aa)) constitute an RNase H type-1 domain. Positions 1038 and 1073 each coordinate Mg(2+). The Integrase-type zinc finger occupies 1158 to 1199 (EKIEPAQEEHDKYHSNVKELVFKFGLPRIVARQIVDTCDKCH). Zn(2+) contacts are provided by His1167, His1171, Cys1195, and Cys1198. The Integrase catalytic domain occupies 1209-1359 (VNSDLGTWQM…TPAERLINMI (151 aa)). Asp1219 contacts Mg(2+). A DNA-binding region (integrase-type) is located at residues 1378–1425 (FRVYYREGRDQLWKGPGELLWKGEGAVILKVGTDIKVVPRRKAKIIKD). The segment at 1426 to 1448 (YGGGKEVDSSSHMEDTGEAREVA) is disordered.

As to quaternary structure, homotrimer. Interacts with gp41 (via C-terminus). Homodimer. The active site consists of two apposed aspartic acid residues. In terms of assembly, heterodimer of p66 RT and p51 RT (RT p66/p51). Heterodimerization of RT is essential for DNA polymerase activity. Despite the sequence identities, p66 RT and p51 RT have distinct folding. As to quaternary structure, homotetramer; may further associate as a homohexadecamer. It depends on Mg(2+) as a cofactor. In terms of processing, specific enzymatic cleavages by the viral protease yield mature proteins. The protease is released by autocatalytic cleavage. The polyprotein is cleaved during and after budding, this process is termed maturation. Proteolytic cleavage of p66 RT removes the RNase H domain to yield the p51 RT subunit. Post-translationally, capsid protein p24 is phosphorylated.

It is found in the virion. Its subcellular location is the host nucleus. The protein resides in the host cytoplasm. The protein localises to the host cell membrane. It carries out the reaction Specific for a P1 residue that is hydrophobic, and P1' variable, but often Pro.. It catalyses the reaction Endohydrolysis of RNA in RNA/DNA hybrids. Three different cleavage modes: 1. sequence-specific internal cleavage of RNA. Human immunodeficiency virus type 1 and Moloney murine leukemia virus enzymes prefer to cleave the RNA strand one nucleotide away from the RNA-DNA junction. 2. RNA 5'-end directed cleavage 13-19 nucleotides from the RNA end. 3. DNA 3'-end directed cleavage 15-20 nucleotides away from the primer terminus.. The catalysed reaction is 3'-end directed exonucleolytic cleavage of viral RNA-DNA hybrid.. The enzyme catalyses DNA(n) + a 2'-deoxyribonucleoside 5'-triphosphate = DNA(n+1) + diphosphate. With respect to regulation, the viral protease is inhibited by many synthetic protease inhibitors (PIs), such as amprenavir, atazanavir, indinavir, loprinavir, nelfinavir, ritonavir and saquinavir. RT can be inhibited either by nucleoside RT inhibitors (NRTIs) or by non nucleoside RT inhibitors (NNRTIs). NRTIs act as chain terminators, whereas NNRTIs inhibit DNA polymerization by binding a small hydrophobic pocket near the RT active site and inducing an allosteric change in this region. Classical NRTIs are abacavir, adefovir (PMEA), didanosine (ddI), lamivudine (3TC), stavudine (d4T), tenofovir (PMPA), zalcitabine (ddC), and zidovudine (AZT). Classical NNRTIs are atevirdine (BHAP U-87201E), delavirdine, efavirenz (DMP-266), emivirine (I-EBU), and nevirapine (BI-RG-587). The tritherapies used as a basic effective treatment of AIDS associate two NRTIs and one NNRTI. Use of protease inhibitors in tritherapy regimens permit more ambitious therapeutic strategies. Its function is as follows. Gag-Pol polyprotein and Gag polyprotein may regulate their own translation, by the binding genomic RNA in the 5'-UTR. At low concentration, Gag-Pol and Gag would promote translation, whereas at high concentration, the polyproteins encapsidate genomic RNA and then shut off translation. In terms of biological role, matrix protein p17 has two main functions: in infected cell, it targets Gag and Gag-pol polyproteins to the plasma membrane via a multipartite membrane-binding signal, that includes its myristointegration complex. The myristoylation signal and the NLS exert conflicting influences its subcellular localization. The key regulation of these motifs might be phosphorylation of a portion of MA molecules on the C-terminal tyrosine at the time of virus maturation, by virion-associated cellular tyrosine kinase. Implicated in the release from host cell mediated by Vpu. Functionally, capsid protein p24 forms the conical core that encapsulates the genomic RNA-nucleocapsid complex in the virion. The core is constituted by capsid protein hexamer subunits. The core is disassembled soon after virion entry. Interaction with host PPIA/CYPA protects the virus from restriction by host TRIM5-alpha and from an unknown antiviral activity in host cells. This capsid restriction by TRIM5 is one of the factors which restricts SIV to the simian species. Nucleocapsid protein p7 encapsulates and protects viral dimeric unspliced (genomic) RNA. Binds these RNAs through its zinc fingers. Facilitates rearangement of nucleic acid secondary structure during retrotranscription of genomic RNA. This capability is referred to as nucleic acid chaperone activity. Its function is as follows. The aspartyl protease mediates proteolytic cleavages of Gag and Gag-Pol polyproteins during or shortly after the release of the virion from the plasma membrane. Cleavages take place as an ordered, step-wise cascade to yield mature proteins. This process is called maturation. Displays maximal activity during the budding process just prior to particle release from the cell. Also cleaves Nef and Vif, probably concomitantly with viral structural proteins on maturation of virus particles. Hydrolyzes host EIF4GI and PABP1 in order to shut off the capped cellular mRNA translation. The resulting inhibition of cellular protein synthesis serves to ensure maximal viral gene expression and to evade host immune response. In terms of biological role, reverse transcriptase/ribonuclease H (RT) is a multifunctional enzyme that converts the viral dimeric RNA genome into dsDNA in the cytoplasm, shortly after virus entry into the cell. This enzyme displays a DNA polymerase activity that can copy either DNA or RNA templates, and a ribonuclease H (RNase H) activity that cleaves the RNA strand of RNA-DNA heteroduplexes in a partially processive 3' to 5' endonucleasic mode. Conversion of viral genomic RNA into dsDNA requires many steps. A tRNA binds to the primer-binding site (PBS) situated at the 5'-end of the viral RNA. RT uses the 3' end of the tRNA primer to perform a short round of RNA-dependent minus-strand DNA synthesis. The reading proceeds through the U5 region and ends after the repeated (R) region which is present at both ends of viral RNA. The portion of the RNA-DNA heteroduplex is digested by the RNase H, resulting in a ssDNA product attached to the tRNA primer. This ssDNA/tRNA hybridizes with the identical R region situated at the 3' end of viral RNA. This template exchange, known as minus-strand DNA strong stop transfer, can be either intra- or intermolecular. RT uses the 3' end of this newly synthesized short ssDNA to perform the RNA-dependent minus-strand DNA synthesis of the whole template. RNase H digests the RNA template except for two polypurine tracts (PPTs) situated at the 5'-end and near the center of the genome. It is not clear if both polymerase and RNase H activities are simultaneous. RNase H can probably proceed both in a polymerase-dependent (RNA cut into small fragments by the same RT performing DNA synthesis) and a polymerase-independent mode (cleavage of remaining RNA fragments by free RTs). Secondly, RT performs DNA-directed plus-strand DNA synthesis using the PPTs that have not been removed by RNase H as primers. PPTs and tRNA primers are then removed by RNase H. The 3' and 5' ssDNA PBS regions hybridize to form a circular dsDNA intermediate. Strand displacement synthesis by RT to the PBS and PPT ends produces a blunt ended, linear dsDNA copy of the viral genome that includes long terminal repeats (LTRs) at both ends. Functionally, integrase catalyzes viral DNA integration into the host chromosome, by performing a series of DNA cutting and joining reactions. This enzyme activity takes place after virion entry into a cell and reverse transcription of the RNA genome in dsDNA. The first step in the integration process is 3' processing. This step requires a complex comprising the viral genome, matrix protein, Vpr and integrase. This complex is called the pre-integration complex (PIC). The integrase protein removes 2 nucleotides from each 3' end of the viral DNA, leaving recessed CA OH's at the 3' ends. In the second step, the PIC enters cell nucleus. This process is mediated through integrase and Vpr proteins, and allows the virus to infect a non dividing cell. This ability to enter the nucleus is specific of lentiviruses, other retroviruses cannot and rely on cell division to access cell chromosomes. In the third step, termed strand transfer, the integrase protein joins the previously processed 3' ends to the 5' ends of strands of target cellular DNA at the site of integration. The 5'-ends are produced by integrase-catalyzed staggered cuts, 5 bp apart. A Y-shaped, gapped, recombination intermediate results, with the 5'-ends of the viral DNA strands and the 3' ends of target DNA strands remaining unjoined, flanking a gap of 5 bp. The last step is viral DNA integration into host chromosome. This involves host DNA repair synthesis in which the 5 bp gaps between the unjoined strands are filled in and then ligated. Since this process occurs at both cuts flanking the SIV genome, a 5 bp duplication of host DNA is produced at the ends of SIV integration. Alternatively, Integrase may catalyze the excision of viral DNA just after strand transfer, this is termed disintegration. The sequence is that of Gag-Pol polyprotein (gag-pol) from Simian immunodeficiency virus (isolate Mm251) (SIV-mac).